We begin with the raw amino-acid sequence, 259 residues long: Potassium/proton antiporter CemA (259 aa).

4 helical membrane-spanning segments follow: residues 47 to 67, 136 to 156, 184 to 204, and 219 to 239; these read CLLV…EPWV, IITH…YLVM, ILLA…ELLI, and IISS…KYWI.

This sequence belongs to the CemA family.

Its subcellular location is the plastid. It localises to the chloroplast inner membrane. The catalysed reaction is K(+)(in) + H(+)(out) = K(+)(out) + H(+)(in). Contributes to K(+)/H(+) antiport activity by supporting proton efflux to control proton extrusion and homeostasis in chloroplasts in a light-dependent manner to modulate photosynthesis. Prevents excessive induction of non-photochemical quenching (NPQ) under continuous-light conditions. Indirectly promotes efficient inorganic carbon uptake into chloroplasts. The polypeptide is Potassium/proton antiporter CemA (Welwitschia mirabilis (Tree tumbo)).